Here is a 99-residue protein sequence, read N- to C-terminus: Small ribosomal subunit protein bS20 (99 aa).

This sequence belongs to the bacterial ribosomal protein bS20 family.

In terms of biological role, binds directly to 16S ribosomal RNA. In Thermomicrobium roseum (strain ATCC 27502 / DSM 5159 / P-2), this protein is Small ribosomal subunit protein bS20.